The following is a 318-amino-acid chain: Olfactory receptor 13C9 (318 aa).

Topologically, residues 1-25 are extracellular; sequence MEWENQTILVEFFLKGHSVHPRLEL. Residue Asn-5 is glycosylated (N-linked (GlcNAc...) asparagine). The helical transmembrane segment at 26–46 threads the bilayer; sequence LFFVLIFIMYVVILLGNGTLI. Residues 47-54 lie on the Cytoplasmic side of the membrane; the sequence is LISILDPH. The helical transmembrane segment at 55-75 threads the bilayer; sequence LHTPMYFFLGNLSFLDICYTT. The Extracellular segment spans residues 76–99; that stretch reads TSIPSTLVSFLSERKTISFSGCAV. A disulfide bridge connects residues Cys-97 and Cys-189. A helical membrane pass occupies residues 100 to 120; it reads QMFLGLAMGTTECVLLGMMAF. Topologically, residues 121-139 are cytoplasmic; that stretch reads DRYVAICNPLRYPIIMSKN. A helical membrane pass occupies residues 140-160; that stretch reads AYVPMAVGSWFAGIVNSAVQT. Over 161–197 the chain is Extracellular; that stretch reads TFVVQLPFCRKNVINHFSCEILAVMKLACADISGNEF. A helical transmembrane segment spans residues 198–217; it reads LMLVATILFTLMPLLLIVIS. Residues 218 to 237 are Cytoplasmic-facing; sequence YSLIISSILKIHSSEGRSKA. The helical transmembrane segment at 238–258 threads the bilayer; it reads FSTCSAHLTVVIIFYGTILFM. At 259-277 the chain is on the extracellular side; it reads YMKPKSKETLNSDDLDATD. A helical membrane pass occupies residues 278 to 298; it reads KIISMFYGVMTPMMNPLIYSL. Over 299 to 318 the chain is Cytoplasmic; the sequence is RNKDVKEAVKHLPNRRFFSK.

The protein belongs to the G-protein coupled receptor 1 family.

Its subcellular location is the cell membrane. Functionally, odorant receptor. This Homo sapiens (Human) protein is Olfactory receptor 13C9 (OR13C9).